A 358-amino-acid chain; its full sequence is tRNA-specific 2-thiouridylase MnmA 2 (358 aa).

ATP-binding positions include 11 to 18 (GMSGGVDS) and M37. The active-site Nucleophile is the C106. A disulfide bond links C106 and C202. Residue G130 participates in ATP binding. An interaction with tRNA region spans residues 152 to 154 (KDQ). The active-site Cysteine persulfide intermediate is C202. Residues 308–309 (RY) form an interaction with tRNA region.

The protein belongs to the MnmA/TRMU family.

It localises to the cytoplasm. It carries out the reaction S-sulfanyl-L-cysteinyl-[protein] + uridine(34) in tRNA + AH2 + ATP = 2-thiouridine(34) in tRNA + L-cysteinyl-[protein] + A + AMP + diphosphate + H(+). Its function is as follows. Catalyzes the 2-thiolation of uridine at the wobble position (U34) of tRNA, leading to the formation of s(2)U34. This chain is tRNA-specific 2-thiouridylase MnmA 2, found in Clostridium tetani (strain Massachusetts / E88).